The primary structure comprises 421 residues: Protein OS-9 homolog (421 aa).

An N-terminal signal peptide occupies residues 1-26 (MWRWSTGVRTMLGYAMCFLALGSALT). The MRH domain maps to 99–220 (EEATVGKKLE…LVSIPSLCEL (122 aa)). Trp-115 is an a mannooligosaccharide derivative binding site. N-linked (GlcNAc...) asparagine glycosylation occurs at Asn-125. Intrachain disulfides connect Cys-173–Cys-206 and Cys-188–Cys-218. Arg-180, Glu-202, and Tyr-208 together coordinate a mannooligosaccharide derivative. Asn-271 and Asn-332 each carry an N-linked (GlcNAc...) asparagine glycan. Residues 375-394 (GNSEDYEQQAPEQLDEEEAE) are compositionally biased toward acidic residues. A disordered region spans residues 375 to 403 (GNSEDYEQQAPEQLDEEEAELTSQSDDPA).

This sequence belongs to the OS-9 family. As to quaternary structure, interacts with missfolded ER lumenal proteins.

It localises to the endoplasmic reticulum membrane. Its function is as follows. Lectin involved in the quality control of the secretory pathway. As a member of the endoplasmic reticulum-associated degradation lumenal (ERAD-L) surveillance system, targets misfolded endoplasmic reticulum lumenal glycoproteins for degradation. The polypeptide is Protein OS-9 homolog (YOS9) (Eremothecium gossypii (strain ATCC 10895 / CBS 109.51 / FGSC 9923 / NRRL Y-1056) (Yeast)).